Here is a 65-residue protein sequence, read N- to C-terminus: Large ribosomal subunit protein bL33 (65 aa).

A disordered region spans residues 20–40; it reads VPPSEKRSPGVSRYTTEKNRR.

The protein belongs to the bacterial ribosomal protein bL33 family.

This Prochlorococcus marinus (strain MIT 9211) protein is Large ribosomal subunit protein bL33.